A 272-amino-acid chain; its full sequence is Shikimate dehydrogenase (NADP(+)) (272 aa).

Residues 14–16 (SKS) and threonine 61 each bind shikimate. Catalysis depends on lysine 65, which acts as the Proton acceptor. NADP(+) is bound at residue glutamate 77. Shikimate is bound by residues asparagine 86 and aspartate 102. NADP(+) is bound by residues 126-130 (GAGGA), 149-154 (NRTVSR), and methionine 213. Tyrosine 215 serves as a coordination point for shikimate. Glycine 237 contributes to the NADP(+) binding site.

This sequence belongs to the shikimate dehydrogenase family. Homodimer.

The enzyme catalyses shikimate + NADP(+) = 3-dehydroshikimate + NADPH + H(+). The protein operates within metabolic intermediate biosynthesis; chorismate biosynthesis; chorismate from D-erythrose 4-phosphate and phosphoenolpyruvate: step 4/7. Involved in the biosynthesis of the chorismate, which leads to the biosynthesis of aromatic amino acids. Catalyzes the reversible NADPH linked reduction of 3-dehydroshikimate (DHSA) to yield shikimate (SA). The polypeptide is Shikimate dehydrogenase (NADP(+)) (Shigella boydii serotype 4 (strain Sb227)).